A 220-amino-acid chain; its full sequence is Protein-methionine-sulfoxide reductase heme-binding subunit MsrQ (220 aa).

The next 5 membrane-spanning stretches (helical) occupy residues 20–40 (IWLL…LGAS), 52–72 (EHTL…VTPI), 86–106 (ALGL…MVLD), 122–142 (PFIT…LTSN), and 159–179 (LVYV…KSWP).

This sequence belongs to the MsrQ family. Heterodimer of a catalytic subunit (MsrP) and a heme-binding subunit (MsrQ). Requires FMN as cofactor. The cofactor is heme b.

The protein localises to the cell inner membrane. Functionally, part of the MsrPQ system that repairs oxidized periplasmic proteins containing methionine sulfoxide residues (Met-O), using respiratory chain electrons. Thus protects these proteins from oxidative-stress damage caused by reactive species of oxygen and chlorine generated by the host defense mechanisms. MsrPQ is essential for the maintenance of envelope integrity under bleach stress, rescuing a wide series of structurally unrelated periplasmic proteins from methionine oxidation. MsrQ provides electrons for reduction to the reductase catalytic subunit MsrP, using the quinone pool of the respiratory chain. This is Protein-methionine-sulfoxide reductase heme-binding subunit MsrQ from Brucella anthropi (strain ATCC 49188 / DSM 6882 / CCUG 24695 / JCM 21032 / LMG 3331 / NBRC 15819 / NCTC 12168 / Alc 37) (Ochrobactrum anthropi).